Here is a 207-residue protein sequence, read N- to C-terminus: Segregation and condensation protein B (207 aa).

Belongs to the ScpB family. Homodimer. Homodimerization may be required to stabilize the binding of ScpA to the Smc head domains. Component of a cohesin-like complex composed of ScpA, ScpB and the Smc homodimer, in which ScpA and ScpB bind to the head domain of Smc. The presence of the three proteins is required for the association of the complex with DNA.

It is found in the cytoplasm. Its function is as follows. Participates in chromosomal partition during cell division. May act via the formation of a condensin-like complex containing Smc and ScpA that pull DNA away from mid-cell into both cell halves. This chain is Segregation and condensation protein B, found in Mycoplasmopsis pulmonis (strain UAB CTIP) (Mycoplasma pulmonis).